The chain runs to 562 residues: Urocanate hydratase (562 aa).

Residues 53-54 (GG), glutamine 131, 177-179 (GMG), glutamate 197, arginine 202, 243-244 (NA), 268-272 (QTSAH), 278-279 (YL), and tyrosine 327 contribute to the NAD(+) site. Cysteine 415 is an active-site residue. Glycine 497 contributes to the NAD(+) binding site.

The protein belongs to the urocanase family. The cofactor is NAD(+).

Its subcellular location is the cytoplasm. The enzyme catalyses 4-imidazolone-5-propanoate = trans-urocanate + H2O. The protein operates within amino-acid degradation; L-histidine degradation into L-glutamate; N-formimidoyl-L-glutamate from L-histidine: step 2/3. Its function is as follows. Catalyzes the conversion of urocanate to 4-imidazolone-5-propionate. In Chelativorans sp. (strain BNC1), this protein is Urocanate hydratase.